Here is an 872-residue protein sequence, read N- to C-terminus: MDQHHGVRGGAPIRRPRRSIETRSHPFRAAGNTQRTYSTPRLSYRDGLSGRASSLEPGGQAHDQNESSTQSTSNNQPSTSFWGYLRRVFSDDAPAQPQAPRSRADFAPPPEEDSSSEEEDEEGPSQAPLDEEDQLMYADQYSVGNSSDDNEEDYLQPEVEYPTSAESGEYHNSGMFAEEEPESESESDMENYETYEENDTEVISDDSHRLTRTWLDRSIRLMDDALAQSSEISKAITKSTRRLYDSQFTPGGRGYKQTETPSQRLVHLSRAGMYDSDEIVMTGDYMEVDDDPNSAYQSWVRAIHHPVAMNPSWEETISNHTNTSFSADIDYDIDELIEMNLARTPPVFEGLLDSADFFYRLPMLYTYATITQDEAYEERQAWSNTQALHGHEQSSWPALVSDYSKGGMYVSPTQEPRGIWRRALKQAMALQLKLCVLGLTEFVTKRELTQHHSAVTFLVDSLLRTAKNCYLASRLLVFAWERRRETGVRRPAEPLIALSGVTLLQPLPPEVSELLEQRTFDIGLRTPQSGVFRAFFGPLVYWAELRRALRDPAAINCRYVGFHLQTSEIYLLARAHSASPGYTKEELVAMEATLTLGTLMLEVALQWIHVASAQLLSENDALKAFRRVSASIPHALAPLGSIRLHDAEFEVLSNPDVMVARDETALSQALFLGYFSVRTALTACMRDYANEVDGGSKETVTGLFLGVGLIIQRLAGHMNFLLNCMAGAALYGGSKIAIHSLTLPRYSLLADVMAPMLQQQSLVDFWRARDDMLEELEITPRPGPPTQGKRVVLEMPLPSDDLPAMTPSGQVNNGAGLGRMVDMAKHLQHYRETIIGDDASSSVGKRGLMKSGVGVRHALEAEKVIRYSPKST.

Residues 1-206 form a disordered region; it reads MDQHHGVRGG…ENDTEVISDD (206 aa). Positions 13 to 33 match the Nuclear localization signal motif; that stretch reads IRRPRRSIETRSHPFRAAGNT. Residues 31 to 41 show a composition bias toward polar residues; that stretch reads GNTQRTYSTPR. Low complexity-rich tracts occupy residues 66–80 and 91–101; these read ESST…PSTS and DDAPAQPQAPR. Acidic residues-rich tracts occupy residues 110 to 134 and 177 to 204; these read PEED…EEDQ and AEEE…EVIS.

The protein belongs to the alphaherpesvirinae HHV-1 UL47 family. As to quaternary structure, interacts with US3 kinase. Interacts with UL31 and UL34; these interactions seem important for efficient virion nuclear egress. Interacts with UL41/VHS. In terms of processing, phosphorylated by US3. This phosphorylation is required for proper nuclear localization. O-glycosylated.

The protein resides in the virion tegument. The protein localises to the host nucleus. Its subcellular location is the host cytoplasm. Its function is as follows. Tegument protein that can bind to various RNA transcripts. Plays a role in the attenuation of selective viral and cellular mRNA degradation by modulating the activity of host shutoff RNase UL41/VHS. Also plays a role in the primary envelopment of virions in the perinuclear space, probably by interacting with two nuclear egress proteins UL31 and UL34. The protein is Tegument protein UL47 homolog (13) of Equus caballus (Horse).